Here is a 68-residue protein sequence, read N- to C-terminus: Large ribosomal subunit protein bL33c (68 aa).

The protein belongs to the bacterial ribosomal protein bL33 family.

The protein resides in the plastid. This is Large ribosomal subunit protein bL33c from Cuscuta reflexa (Southern Asian dodder).